A 288-amino-acid chain; its full sequence is 2-dehydro-3-deoxyphosphooctonate aldolase (288 aa).

This sequence belongs to the KdsA family.

The protein localises to the cytoplasm. It carries out the reaction D-arabinose 5-phosphate + phosphoenolpyruvate + H2O = 3-deoxy-alpha-D-manno-2-octulosonate-8-phosphate + phosphate. The protein operates within carbohydrate biosynthesis; 3-deoxy-D-manno-octulosonate biosynthesis; 3-deoxy-D-manno-octulosonate from D-ribulose 5-phosphate: step 2/3. It functions in the pathway bacterial outer membrane biogenesis; lipopolysaccharide biosynthesis. This is 2-dehydro-3-deoxyphosphooctonate aldolase from Syntrophobacter fumaroxidans (strain DSM 10017 / MPOB).